The chain runs to 204 residues: Matrix-remodeling-associated protein 7 (204 aa).

A helical transmembrane segment spans residues 7–27 (LLAALPALATALALLLAWLLV). A disordered region spans residues 32 to 148 (AASPEPARAP…FSFKYSPGKL (117 aa)). Residues 38–47 (ARAPPEPAPP) show a composition bias toward pro residues. Low complexity predominate over residues 63 to 103 (EPAASPAGPEEPGEPAGLGELGEPAGPGEPEGPGDPAAAPA). Residues 110–126 (VEARQEEEQDLDGEKGP) are compositionally biased toward basic and acidic residues. The residue at position 191 (S191) is a Phosphoserine.

It localises to the membrane. The chain is Matrix-remodeling-associated protein 7 (MXRA7) from Homo sapiens (Human).